Reading from the N-terminus, the 372-residue chain is Ubl carboxyl-terminal hydrolase 18 (372 aa).

The tract at residues 19–45 is disordered; it reads SSQSPADLEEKKEEDSNMKREQPRERP. Residues 26–45 are compositionally biased toward basic and acidic residues; the sequence is LEEKKEEDSNMKREQPRERP. The tract at residues 36–51 is mediates interaction with IFNAR2; that stretch reads MKREQPRERPRAWDYP. The tract at residues 51-112 is mediates interaction with STAT2; the sequence is PHGLVGLHNI…MLLLLEKMQD (62 aa). A USP domain is found at 55 to 370; that stretch reads VGLHNIGQTC…TAYLLVYMKM (316 aa). Cysteine 64 acts as the Nucleophile in catalysis. The interval 303–312 is mediates interaction with STAT2 and necessary for the negative regulation of the type I IFN signaling pathway; that stretch reads ELFAVIAHVG. The interval 313–372 is mediates interaction with IFNAR2; it reads MADSGHYCVYIRNAVDGKWFCFNDSNICLVSWEDIQCTYGNPNYHWQETAYLLVYMKMEC. Catalysis depends on histidine 318, which acts as the Proton acceptor.

This sequence belongs to the peptidase C19 family. As to quaternary structure, interacts with STAT2; the interaction is direct. Interacts with IFNAR2; indirectly via STAT2, it negatively regulates the assembly of the ternary interferon-IFNAR1-IFNAR2 complex and inhibits type I interferon signaling. Interacts with STING1. Interacts with USP20.

The protein resides in the cytoplasm. It localises to the nucleus. It carries out the reaction Thiol-dependent hydrolysis of ester, thioester, amide, peptide and isopeptide bonds formed by the C-terminal Gly of ubiquitin (a 76-residue protein attached to proteins as an intracellular targeting signal).. In terms of biological role, interferon-induced ISG15-specific protease that plays a crucial role for maintaining a proper balance of ISG15-conjugated proteins in cells. Regulates protein ISGylation by efficiently cleaving ISG15 conjugates linked via isopeptide bonds. Regulates T-cell activation and T-helper 17 (Th17) cell differentiation by deubiquitinating TAK1, likely to keep TAK1-TAB complexes in steady conditions. In turn, restricts activation of NF-kappa-B, NFAT, and JNK as well as expression of IL2 in T-cells after TCR activation. Acts as a molecular adapter with USP20 to promote innate antiviral response through deubiquitinating STING1. Involved also in the negative regulation of the inflammatory response triggered by type I interferon. Upon recruitment by STAT2 to the type I interferon receptor subunit IFNAR2 interferes with the assembly of the ternary interferon-IFNAR1-IFNAR2 complex and acts as a negative regulator of the type I interferon signaling pathway. Functionally, has enzymatic activity similar to isoform 1 and interferes with type I interferon signaling. Major deISGylation enzyme for nuclear proteins. This chain is Ubl carboxyl-terminal hydrolase 18 (USP18), found in Homo sapiens (Human).